A 451-amino-acid chain; its full sequence is Bifunctional protein GlmU (451 aa).

The tract at residues 1 to 225 is pyrophosphorylase; that stretch reads MVVVAILAAG…YQEILGINDR (225 aa). Residues 7–10, lysine 21, glutamine 72, and 77–78 each bind UDP-N-acetyl-alpha-D-glucosamine; these read LAAG and GT. Residue aspartate 102 coordinates Mg(2+). Residues glycine 139, glutamate 154, asparagine 169, and asparagine 223 each coordinate UDP-N-acetyl-alpha-D-glucosamine. Position 223 (asparagine 223) interacts with Mg(2+). The tract at residues 226–246 is linker; the sequence is LQLATAYEILQRRVKEQWMMA. Positions 247–451 are N-acetyltransferase; it reads GVTLIDPNSI…PGWRKKSGES (205 aa). Residues arginine 328 and lysine 346 each contribute to the UDP-N-acetyl-alpha-D-glucosamine site. Histidine 358 serves as the catalytic Proton acceptor. Tyrosine 361 and asparagine 372 together coordinate UDP-N-acetyl-alpha-D-glucosamine. Acetyl-CoA contacts are provided by residues alanine 375, 381–382, serine 400, alanine 418, and arginine 435; that span reads NY.

In the N-terminal section; belongs to the N-acetylglucosamine-1-phosphate uridyltransferase family. The protein in the C-terminal section; belongs to the transferase hexapeptide repeat family. Homotrimer. Mg(2+) is required as a cofactor.

The protein resides in the cytoplasm. It catalyses the reaction alpha-D-glucosamine 1-phosphate + acetyl-CoA = N-acetyl-alpha-D-glucosamine 1-phosphate + CoA + H(+). It carries out the reaction N-acetyl-alpha-D-glucosamine 1-phosphate + UTP + H(+) = UDP-N-acetyl-alpha-D-glucosamine + diphosphate. The protein operates within nucleotide-sugar biosynthesis; UDP-N-acetyl-alpha-D-glucosamine biosynthesis; N-acetyl-alpha-D-glucosamine 1-phosphate from alpha-D-glucosamine 6-phosphate (route II): step 2/2. It functions in the pathway nucleotide-sugar biosynthesis; UDP-N-acetyl-alpha-D-glucosamine biosynthesis; UDP-N-acetyl-alpha-D-glucosamine from N-acetyl-alpha-D-glucosamine 1-phosphate: step 1/1. It participates in bacterial outer membrane biogenesis; LPS lipid A biosynthesis. Functionally, catalyzes the last two sequential reactions in the de novo biosynthetic pathway for UDP-N-acetylglucosamine (UDP-GlcNAc). The C-terminal domain catalyzes the transfer of acetyl group from acetyl coenzyme A to glucosamine-1-phosphate (GlcN-1-P) to produce N-acetylglucosamine-1-phosphate (GlcNAc-1-P), which is converted into UDP-GlcNAc by the transfer of uridine 5-monophosphate (from uridine 5-triphosphate), a reaction catalyzed by the N-terminal domain. This chain is Bifunctional protein GlmU, found in Trichormus variabilis (strain ATCC 29413 / PCC 7937) (Anabaena variabilis).